The following is a 1171-amino-acid chain: ATP-dependent helicase/deoxyribonuclease subunit B (1171 aa).

The UvrD-like helicase ATP-binding domain maps to 1-301 (MSLRFVIGRA…AHLEMHYEAR (301 aa)). Position 8–15 (8–15 (GRAGSGKS)) interacts with ATP. The UvrD-like helicase C-terminal domain occupies 281 to 587 (MKQPRFHSQA…QFANIPPSLD (307 aa)). The [4Fe-4S] cluster site is built by Cys-805, Cys-1129, Cys-1132, and Cys-1138.

It belongs to the helicase family. AddB/RexB type 1 subfamily. As to quaternary structure, heterodimer of AddA and AddB. The cofactor is Mg(2+). [4Fe-4S] cluster is required as a cofactor.

Functionally, the heterodimer acts as both an ATP-dependent DNA helicase and an ATP-dependent, dual-direction single-stranded exonuclease. Recognizes the chi site generating a DNA molecule suitable for the initiation of homologous recombination. The AddB subunit has 5' -&gt; 3' nuclease activity but not helicase activity. In Bacillus mycoides (strain KBAB4) (Bacillus weihenstephanensis), this protein is ATP-dependent helicase/deoxyribonuclease subunit B.